Consider the following 241-residue polypeptide: 2-C-methyl-D-erythritol 4-phosphate cytidylyltransferase (241 aa).

Belongs to the IspD/TarI cytidylyltransferase family. IspD subfamily.

It catalyses the reaction 2-C-methyl-D-erythritol 4-phosphate + CTP + H(+) = 4-CDP-2-C-methyl-D-erythritol + diphosphate. The protein operates within isoprenoid biosynthesis; isopentenyl diphosphate biosynthesis via DXP pathway; isopentenyl diphosphate from 1-deoxy-D-xylulose 5-phosphate: step 2/6. In terms of biological role, catalyzes the formation of 4-diphosphocytidyl-2-C-methyl-D-erythritol from CTP and 2-C-methyl-D-erythritol 4-phosphate (MEP). The polypeptide is 2-C-methyl-D-erythritol 4-phosphate cytidylyltransferase (Baumannia cicadellinicola subsp. Homalodisca coagulata).